A 209-amino-acid chain; its full sequence is Large ribosomal subunit protein uL3 (209 aa).

The disordered stretch occupies residues 126 to 165; sequence HNFGGGSRTHGQSDRLRAPGSVGGSSDPSRTFRGTRMAGR.

It belongs to the universal ribosomal protein uL3 family. In terms of assembly, part of the 50S ribosomal subunit. Forms a cluster with proteins L14 and L19.

Functionally, one of the primary rRNA binding proteins, it binds directly near the 3'-end of the 23S rRNA, where it nucleates assembly of the 50S subunit. The chain is Large ribosomal subunit protein uL3 from Chlorobium limicola (strain DSM 245 / NBRC 103803 / 6330).